Reading from the N-terminus, the 257-residue chain is Capsid protein (257 aa).

Residues 3–20 (KRTGDILMSSPLSKFRRK) carry the Bipartite nuclear localization signal motif. The Nuclear localization signal motif lies at 40 to 54 (KRRSWTYRPMYRKPR). A zinc finger lies at 68–85 (CEGPCKVQSYEQRDDVKH). A Nuclear export signal motif is present at residues 101–122 (ITHRVGKRFCIKSIYILGKIWM). The Bipartite nuclear localization signal signature appears at 201 to 248 (KRFFKVNTHVVYNHQEQAKYENHTENALLLYMACTHASNPVYATLKIR).

This sequence belongs to the geminiviridae capsid protein family. Homomultimer. Binds to single-stranded and double-stranded viral DNA. Interacts (via nuclear localization signals) with host importin alpha-1a.

It localises to the virion. The protein localises to the host nucleus. Functionally, encapsidates the viral genome into characteristic twinned ('geminate') particles. Binds the genomic viral ssDNA and shuttles it into and out of the cell nucleus. Plays a role in protection of the genome from degradation, virus acquisition and transmission by insect vectors, infectivity, and systemic movement. The CP of monopartite geminiviruses is absolutely essential for virus movement. This Solanum lycopersicum (Tomato) protein is Capsid protein.